Consider the following 647-residue polypeptide: Acetyl-coenzyme A synthetase (647 aa).

Residues 190–193, T308, and N332 each bind CoA; that span reads RGGR. ATP contacts are provided by residues 384-386, 408-413, D497, and R512; these read GEP and DTWWQT. S520 lines the CoA pocket. R523 lines the ATP pocket. 3 residues coordinate Mg(2+): V534, H536, and V539. R581 is a binding site for CoA. K606 carries the post-translational modification N6-acetyllysine.

The protein belongs to the ATP-dependent AMP-binding enzyme family. Mg(2+) serves as cofactor. Post-translationally, acetylated. Deacetylation by the SIR2-homolog deacetylase activates the enzyme.

The catalysed reaction is acetate + ATP + CoA = acetyl-CoA + AMP + diphosphate. In terms of biological role, catalyzes the conversion of acetate into acetyl-CoA (AcCoA), an essential intermediate at the junction of anabolic and catabolic pathways. AcsA undergoes a two-step reaction. In the first half reaction, AcsA combines acetate with ATP to form acetyl-adenylate (AcAMP) intermediate. In the second half reaction, it can then transfer the acetyl group from AcAMP to the sulfhydryl group of CoA, forming the product AcCoA. This is Acetyl-coenzyme A synthetase from Parvibaculum lavamentivorans (strain DS-1 / DSM 13023 / NCIMB 13966).